The sequence spans 357 residues: GPI mannosyltransferase 2 (357 aa).

8 consecutive transmembrane segments (helical) span residues 6–26, 86–106, 128–148, 167–187, 201–221, 257–277, 286–306, and 334–354; these read TLIV…LVVP, AIAY…ALML, ILSP…FALL, VLGA…PFLF, GVSV…TQYL, YWTA…YLMY, LVPF…MWHV, and YVVR…GAYL.

The protein belongs to the PIGV family.

Its subcellular location is the endoplasmic reticulum membrane. Its pathway is glycolipid biosynthesis; glycosylphosphatidylinositol-anchor biosynthesis. Functionally, mannosyltransferase involved in glycosylphosphatidylinositol-anchor biosynthesis. Transfers the second mannose to the glycosylphosphatidylinositol during GPI precursor assembly. In Yarrowia lipolytica (strain CLIB 122 / E 150) (Yeast), this protein is GPI mannosyltransferase 2 (GPI18).